The chain runs to 206 residues: Large ribosomal subunit protein uL4 (206 aa).

Positions 48 to 97 (THAVKNRSLVSGGGKKPWKQKHTGRARQGSTRASQWVGGGKAMGPKPRDY) are disordered. Positions 63–72 (KPWKQKHTGR) are enriched in basic residues.

The protein belongs to the universal ribosomal protein uL4 family. Part of the 50S ribosomal subunit.

Its function is as follows. One of the primary rRNA binding proteins, this protein initially binds near the 5'-end of the 23S rRNA. It is important during the early stages of 50S assembly. It makes multiple contacts with different domains of the 23S rRNA in the assembled 50S subunit and ribosome. Forms part of the polypeptide exit tunnel. This chain is Large ribosomal subunit protein uL4, found in Anaeromyxobacter dehalogenans (strain 2CP-C).